A 246-amino-acid chain; its full sequence is MyoD family inhibitor domain-containing protein (246 aa).

2 disordered regions span residues 1–93 (MSQE…EEET) and 134–164 (KIQSSLSVSSDGSKKSKESSAYSQKPSASPE). At 1-170 (MSQEREPFSP…ASPEDGCVHC (170 aa)) the chain is on the extracellular side. Over residues 63–87 (EDNSNSQPIKAQPQRLPQPNTSALE) the composition is skewed to polar residues. Residues 74–246 (QPQRLPQPNT…MECCGICFPS (173 aa)) form the MDFI domain. The helical transmembrane segment at 171–188 (ILTCLFCEFLTLCNIVVG) threads the bilayer. Over 189–246 (QASCGICTSEACCCCCTEEMGDDCNCPCDMDCGIMDACCESSDCLEICMECCGICFPS) the chain is Cytoplasmic.

This sequence belongs to the MDFI family. Expressed broadly at a low level in the early embryo.

The protein resides in the cytoplasm. Its subcellular location is the cell membrane. It localises to the secreted. Its function is as follows. Required to control the activity of various transcription factors through their sequestration in the cytoplasm. Retains nuclear Zic proteins in the cytoplasm and inhibits their transcriptional activation. Required for dorsoanterior development. Necessary for siamois to activate downstream target genes, including gsc, during execution of the dorsal organizer program. Also regulates the transcriptional activity of TCF7L1/TCF3 by interacting directly with TCF7L1/TCF3 and preventing it from binding DNA. Involved in the development of lymphatic vessel valves. It is required to promote lymphatic endothelial cell migration, in a process that involves down-regulation of integrin beta 1 activation and control of cell adhesion to the extracellular matrix. The chain is MyoD family inhibitor domain-containing protein from Xenopus laevis (African clawed frog).